The sequence spans 245 residues: OCIA domain-containing protein 1 (245 aa).

The 112-residue stretch at 1–112 (MNGRADFREP…KKLENSPLGE (112 aa)) folds into the OCIA domain. Ser-108, Ser-116, Ser-123, and Ser-191 each carry phosphoserine. Disordered stretches follow at residues 111-141 (GEALRSGQARRSSPPGHYYQKSKYDSSVSGQ) and 169-245 (NESA…TWDE). Basic and acidic residues-rich tracts occupy residues 190 to 210 (ESPKRKNITYEELRNKNRESY) and 224 to 238 (PMHERVPKKEVKVNK).

The protein belongs to the OCIAD1 family. As to quaternary structure, interacts with OCIAD2. Interacts with STAT3. As to expression, isoform 1 is highly expressed in many tissues, including testis, brain, placenta, ovary, prostate and mammary gland. Isoform 2 expression is restricted to the central nervous system including brain, cerebellum and spinal cord.

The protein localises to the endosome. Functionally, maintains stem cell potency. Increases STAT3 phosphorylation and controls ERK phosphorylation. May act as a scaffold, increasing STAT3 recruitment onto endosomes. Involved in integrin-mediated cancer cell adhesion and colony formation in ovarian cancer. This Homo sapiens (Human) protein is OCIA domain-containing protein 1.